Consider the following 194-residue polypeptide: Small ribosomal subunit protein eS7 (194 aa).

This sequence belongs to the eukaryotic ribosomal protein eS7 family.

The chain is Small ribosomal subunit protein eS7 (rps-7) from Caenorhabditis elegans.